A 65-amino-acid chain; its full sequence is Large ribosomal subunit protein bL35 (65 aa).

The protein belongs to the bacterial ribosomal protein bL35 family.

The polypeptide is Large ribosomal subunit protein bL35 (Xanthomonas campestris pv. campestris (strain ATCC 33913 / DSM 3586 / NCPPB 528 / LMG 568 / P 25)).